We begin with the raw amino-acid sequence, 443 residues long: Glucose-6-phosphate isomerase (443 aa).

The active-site Proton donor is the Glu-285. Active-site residues include His-306 and Lys-420.

Belongs to the GPI family.

The protein localises to the cytoplasm. It catalyses the reaction alpha-D-glucose 6-phosphate = beta-D-fructose 6-phosphate. It functions in the pathway carbohydrate biosynthesis; gluconeogenesis. The protein operates within carbohydrate degradation; glycolysis; D-glyceraldehyde 3-phosphate and glycerone phosphate from D-glucose: step 2/4. Functionally, catalyzes the reversible isomerization of glucose-6-phosphate to fructose-6-phosphate. The protein is Glucose-6-phosphate isomerase of Staphylococcus aureus (strain bovine RF122 / ET3-1).